We begin with the raw amino-acid sequence, 220 residues long: ATP synthase subunit beta, chloroplastic (220 aa).

This sequence belongs to the ATPase alpha/beta chains family. In terms of assembly, F-type ATPases have 2 components, CF(1) - the catalytic core - and CF(0) - the membrane proton channel. CF(1) has five subunits: alpha(3), beta(3), gamma(1), delta(1), epsilon(1). CF(0) has four main subunits: a(1), b(1), b'(1) and c(9-12).

It is found in the plastid. It localises to the chloroplast thylakoid membrane. It carries out the reaction ATP + H2O + 4 H(+)(in) = ADP + phosphate + 5 H(+)(out). Functionally, produces ATP from ADP in the presence of a proton gradient across the membrane. The catalytic sites are hosted primarily by the beta subunits. This is ATP synthase subunit beta, chloroplastic (atpB) from Osmundastrum cinnamomeum (Cinnamon fern).